Reading from the N-terminus, the 108-residue chain is Large ribosomal subunit protein uL23 (108 aa).

The protein belongs to the universal ribosomal protein uL23 family. As to quaternary structure, part of the 50S ribosomal subunit. Contacts protein L29, and trigger factor when it is bound to the ribosome.

Functionally, one of the early assembly proteins it binds 23S rRNA. One of the proteins that surrounds the polypeptide exit tunnel on the outside of the ribosome. Forms the main docking site for trigger factor binding to the ribosome. This is Large ribosomal subunit protein uL23 from Mycoplasmoides gallisepticum (strain R(low / passage 15 / clone 2)) (Mycoplasma gallisepticum).